The chain runs to 612 residues: uncharacterized protein (612 aa).

The span at 176–196 (LVQRNNATTSPTTDSASENNE) shows a compositional bias: polar residues. Positions 176 to 203 (LVQRNNATTSPTTDSASENNESVPSLTS) are disordered.

This sequence to yeast YNL034w.

This is an uncharacterized protein from Saccharomyces cerevisiae (strain ATCC 204508 / S288c) (Baker's yeast).